Here is a 92-residue protein sequence, read N- to C-terminus: UPF0358 protein Exig_1994 (92 aa).

It belongs to the UPF0358 family.

This is UPF0358 protein Exig_1994 from Exiguobacterium sibiricum (strain DSM 17290 / CCUG 55495 / CIP 109462 / JCM 13490 / 255-15).